Consider the following 140-residue polypeptide: Nucleoside diphosphate kinase (140 aa).

Residues Lys-11, Phe-59, Arg-87, Thr-93, Arg-104, and Asn-114 each coordinate ATP. The active-site Pros-phosphohistidine intermediate is the His-117.

This sequence belongs to the NDK family. In terms of assembly, homotetramer. Mg(2+) is required as a cofactor.

The protein resides in the cytoplasm. The enzyme catalyses a 2'-deoxyribonucleoside 5'-diphosphate + ATP = a 2'-deoxyribonucleoside 5'-triphosphate + ADP. It carries out the reaction a ribonucleoside 5'-diphosphate + ATP = a ribonucleoside 5'-triphosphate + ADP. Its function is as follows. Major role in the synthesis of nucleoside triphosphates other than ATP. The ATP gamma phosphate is transferred to the NDP beta phosphate via a ping-pong mechanism, using a phosphorylated active-site intermediate. This Rickettsia conorii (strain ATCC VR-613 / Malish 7) protein is Nucleoside diphosphate kinase.